The chain runs to 114 residues: T cell receptor alpha variable 3 (114 aa).

Residues 1-20 (MASAPISMLAMLFTLSGLRA) form the signal peptide. In terms of domain architecture, Ig-like spans 21-114 (QSVAQPEDQV…SALYFCAVRD (94 aa)). Cysteine 42 and cysteine 110 are oxidised to a cystine. The N-linked (GlcNAc...) asparagine glycan is linked to asparagine 87.

As to quaternary structure, alpha-beta TR is a heterodimer composed of an alpha and beta chain; disulfide-linked. The alpha-beta TR is associated with the transmembrane signaling CD3 coreceptor proteins to form the TR-CD3 (TcR or TCR). The assembly of alpha-beta TR heterodimers with CD3 occurs in the endoplasmic reticulum where a single alpha-beta TR heterodimer associates with one CD3D-CD3E heterodimer, one CD3G-CD3E heterodimer and one CD247 homodimer forming a stable octameric structure. CD3D-CD3E and CD3G-CD3E heterodimers preferentially associate with TR alpha and TR beta chains, respectively. The association of the CD247 homodimer is the last step of TcR assembly in the endoplasmic reticulum and is required for transport to the cell surface.

Its subcellular location is the cell membrane. Its function is as follows. V region of the variable domain of T cell receptor (TR) alpha chain that participates in the antigen recognition. Alpha-beta T cell receptors are antigen specific receptors which are essential to the immune response and are present on the cell surface of T lymphocytes. Recognize peptide-major histocompatibility (MH) (pMH) complexes that are displayed by antigen presenting cells (APC), a prerequisite for efficient T cell adaptive immunity against pathogens. Binding of alpha-beta TR to pMH complex initiates TR-CD3 clustering on the cell surface and intracellular activation of LCK that phosphorylates the ITAM motifs of CD3G, CD3D, CD3E and CD247 enabling the recruitment of ZAP70. In turn ZAP70 phosphorylates LAT, which recruits numerous signaling molecules to form the LAT signalosome. The LAT signalosome propagates signal branching to three major signaling pathways, the calcium, the mitogen-activated protein kinase (MAPK) kinase and the nuclear factor NF-kappa-B (NF-kB) pathways, leading to the mobilization of transcription factors that are critical for gene expression and essential for T cell growth and differentiation. The T cell repertoire is generated in the thymus, by V-(D)-J rearrangement. This repertoire is then shaped by intrathymic selection events to generate a peripheral T cell pool of self-MH restricted, non-autoaggressive T cells. Post-thymic interaction of alpha-beta TR with the pMH complexes shapes TR structural and functional avidity. The polypeptide is T cell receptor alpha variable 3 (Homo sapiens (Human)).